Here is a 785-residue protein sequence, read N- to C-terminus: Phenylalanine--tRNA ligase beta subunit (785 aa).

A tRNA-binding domain is found at 39–150 (RTWAAGVVVG…ASLPLGLDVG (112 aa)). The B5 domain maps to 400-476 (RENRVVSLRP…RVVGYDRFAP (77 aa)). Residues D454, D460, E463, and E464 each contribute to the Mg(2+) site. An FDX-ACB domain is found at 692–784 (SPFPPAARDL…LAERYSVDLR (93 aa)).

This sequence belongs to the phenylalanyl-tRNA synthetase beta subunit family. Type 1 subfamily. In terms of assembly, tetramer of two alpha and two beta subunits. It depends on Mg(2+) as a cofactor.

The protein resides in the cytoplasm. It carries out the reaction tRNA(Phe) + L-phenylalanine + ATP = L-phenylalanyl-tRNA(Phe) + AMP + diphosphate + H(+). The protein is Phenylalanine--tRNA ligase beta subunit of Gloeobacter violaceus (strain ATCC 29082 / PCC 7421).